A 216-amino-acid chain; its full sequence is Large ribosomal subunit protein uL3 (216 aa).

The segment at 134 to 153 (RATHGNSRSHNVPGSIGMAQ) is disordered. An N5-methylglutamine modification is found at Gln-153.

The protein belongs to the universal ribosomal protein uL3 family. As to quaternary structure, part of the 50S ribosomal subunit. Forms a cluster with proteins L14 and L19. Methylated by PrmB.

One of the primary rRNA binding proteins, it binds directly near the 3'-end of the 23S rRNA, where it nucleates assembly of the 50S subunit. This is Large ribosomal subunit protein uL3 from Cupriavidus taiwanensis (strain DSM 17343 / BCRC 17206 / CCUG 44338 / CIP 107171 / LMG 19424 / R1) (Ralstonia taiwanensis (strain LMG 19424)).